We begin with the raw amino-acid sequence, 445 residues long: Maltoporin 2 (445 aa).

An N-terminal signal peptide occupies residues M1 to A25.

Belongs to the porin LamB (TC 1.B.3) family. Homotrimer formed of three 18-stranded antiparallel beta-barrels, containing three independent channels.

The protein localises to the cell outer membrane. The enzyme catalyses beta-maltose(in) = beta-maltose(out). Functionally, involved in the transport of maltose and maltodextrins. The chain is Maltoporin 2 from Aeromonas salmonicida (strain A449).